Reading from the N-terminus, the 635-residue chain is 1-deoxy-D-xylulose-5-phosphate synthase (635 aa).

Thiamine diphosphate-binding positions include H78 and 119–121; that span reads GHA. Residue D150 coordinates Mg(2+). Thiamine diphosphate contacts are provided by residues 151–152, N179, F291, and E376; that span reads GS. A Mg(2+)-binding site is contributed by N179.

This sequence belongs to the transketolase family. DXPS subfamily. In terms of assembly, homodimer. The cofactor is Mg(2+). It depends on thiamine diphosphate as a cofactor.

The enzyme catalyses D-glyceraldehyde 3-phosphate + pyruvate + H(+) = 1-deoxy-D-xylulose 5-phosphate + CO2. It participates in metabolic intermediate biosynthesis; 1-deoxy-D-xylulose 5-phosphate biosynthesis; 1-deoxy-D-xylulose 5-phosphate from D-glyceraldehyde 3-phosphate and pyruvate: step 1/1. In terms of biological role, catalyzes the acyloin condensation reaction between C atoms 2 and 3 of pyruvate and glyceraldehyde 3-phosphate to yield 1-deoxy-D-xylulose-5-phosphate (DXP). This Chlorobaculum tepidum (strain ATCC 49652 / DSM 12025 / NBRC 103806 / TLS) (Chlorobium tepidum) protein is 1-deoxy-D-xylulose-5-phosphate synthase.